A 197-amino-acid polypeptide reads, in one-letter code: Recombination protein RecR (197 aa).

The C4-type zinc finger occupies 55–70; the sequence is CVQCRDFTESEICTIC. The Toprim domain maps to 78–173; it reads QQLCVVESPA…RPSRLAQGMP (96 aa).

Belongs to the RecR family.

Its function is as follows. May play a role in DNA repair. It seems to be involved in an RecBC-independent recombinational process of DNA repair. It may act with RecF and RecO. This chain is Recombination protein RecR, found in Xanthomonas euvesicatoria pv. vesicatoria (strain 85-10) (Xanthomonas campestris pv. vesicatoria).